We begin with the raw amino-acid sequence, 396 residues long: 1-deoxy-D-xylulose 5-phosphate reductoisomerase (396 aa).

Positions 15, 16, 17, 18, 41, and 130 each coordinate NADPH. Position 131 (K131) interacts with 1-deoxy-D-xylulose 5-phosphate. Position 132 (E132) interacts with NADPH. D155 is a Mn(2+) binding site. 1-deoxy-D-xylulose 5-phosphate is bound by residues S156, E157, S181, and H204. E157 lines the Mn(2+) pocket. G210 contacts NADPH. S217, N222, K223, and E226 together coordinate 1-deoxy-D-xylulose 5-phosphate. Position 226 (E226) interacts with Mn(2+).

Belongs to the DXR family. The cofactor is Mg(2+). Mn(2+) is required as a cofactor.

It catalyses the reaction 2-C-methyl-D-erythritol 4-phosphate + NADP(+) = 1-deoxy-D-xylulose 5-phosphate + NADPH + H(+). Its pathway is isoprenoid biosynthesis; isopentenyl diphosphate biosynthesis via DXP pathway; isopentenyl diphosphate from 1-deoxy-D-xylulose 5-phosphate: step 1/6. Catalyzes the NADPH-dependent rearrangement and reduction of 1-deoxy-D-xylulose-5-phosphate (DXP) to 2-C-methyl-D-erythritol 4-phosphate (MEP). In Bifidobacterium longum (strain NCC 2705), this protein is 1-deoxy-D-xylulose 5-phosphate reductoisomerase.